Reading from the N-terminus, the 348-residue chain is D-amino-acid oxidase (348 aa).

FAD-binding residues include Ala-15, Ile-18, Lys-40, Ser-52, Gly-56, and Asn-58. Residues Tyr-232 and Arg-295 each contribute to the (R)-lactate site. Residues Tyr-232 and Arg-295 each coordinate anthranilate. 5 residues coordinate FAD: Arg-295, Ser-323, Gly-326, Tyr-327, and Gln-328.

Belongs to the DAMOX/DASOX family. FAD is required as a cofactor.

It localises to the peroxisome. It catalyses the reaction a D-alpha-amino acid + O2 + H2O = a 2-oxocarboxylate + H2O2 + NH4(+). The catalysed reaction is D-serine + O2 + H2O = 3-hydroxypyruvate + H2O2 + NH4(+). It carries out the reaction D-alanine + O2 + H2O = pyruvate + H2O2 + NH4(+). The enzyme catalyses D-arginine + O2 + H2O = 5-guanidino-2-oxopentanoate + H2O2 + NH4(+). Functionally, catalyzes the oxidative deamination of D-amino acids with broad substrate specificity. Enables the organism to utilize D-amino acids as a source of nutrients. This Schizosaccharomyces pombe (strain 972 / ATCC 24843) (Fission yeast) protein is D-amino-acid oxidase.